The following is a 906-amino-acid chain: Aconitate hydratase A (906 aa).

The [4Fe-4S] cluster site is built by Cys443, Cys509, and Cys512.

This sequence belongs to the aconitase/IPM isomerase family. In terms of assembly, monomer. [4Fe-4S] cluster is required as a cofactor.

It carries out the reaction citrate = D-threo-isocitrate. It catalyses the reaction (2S,3R)-3-hydroxybutane-1,2,3-tricarboxylate = 2-methyl-cis-aconitate + H2O. Its pathway is carbohydrate metabolism; tricarboxylic acid cycle; isocitrate from oxaloacetate: step 2/2. It functions in the pathway organic acid metabolism; propanoate degradation. Involved in the catabolism of short chain fatty acids (SCFA) via the tricarboxylic acid (TCA)(acetyl degradation route) and probably via the 2-methylcitrate cycle I (propionate degradation route). Catalyzes the reversible isomerization of citrate to isocitrate via cis-aconitate. Could catalyze the hydration of 2-methyl-cis-aconitate to yield (2R,3S)-2-methylisocitrate. The apo form of AcnA functions as a RNA-binding regulatory protein. The polypeptide is Aconitate hydratase A (Bradyrhizobium diazoefficiens (strain JCM 10833 / BCRC 13528 / IAM 13628 / NBRC 14792 / USDA 110)).